A 90-amino-acid chain; its full sequence is Mitochondrial import inner membrane translocase subunit Tim10-B (90 aa).

The Twin CX3C motif motif lies at 29–54 (CHKKCVPPHYKEAELSKGESVCLDRC). Intrachain disulfides connect Cys29–Cys54 and Cys33–Cys50.

This sequence belongs to the small Tim family. Heterohexamer; composed of 3 copies of TIMM9 and 3 copies of TIMM10/TIM10A, named soluble 70 kDa complex. The complex forms a 6-bladed alpha-propeller structure and associates with the TIMM22 component of the TIM22 complex. Interacts with multi-pass transmembrane proteins in transit.

It is found in the mitochondrion inner membrane. Its function is as follows. Mitochondrial intermembrane chaperone that participates in the import and insertion of multi-pass transmembrane proteins into the mitochondrial inner membrane. May also be required for the transfer of beta-barrel precursors from the TOM complex to the sorting and assembly machinery (SAM complex) of the outer membrane. Acts as a chaperone-like protein that protects the hydrophobic precursors from aggregation and guide them through the mitochondrial intermembrane space. The sequence is that of Mitochondrial import inner membrane translocase subunit Tim10-B (timm10-b) from Xenopus laevis (African clawed frog).